A 377-amino-acid chain; its full sequence is Galactoside alpha-(1,2)-fucosyltransferase 1 (377 aa).

Topologically, residues M1–Q8 are cytoplasmic. A helical; Signal-anchor for type II membrane protein transmembrane segment spans residues L9 to F26. At H27–V377 the chain is on the lumenal side. N67, N303, and N329 each carry an N-linked (GlcNAc...) asparagine glycan.

This sequence belongs to the glycosyltransferase 11 family. In terms of tissue distribution, in the adult, highly expressed in pancreas, testis and epididymis and to a lesser extent in thymus, lung, stomach, small intestine, colon, spleen and uterus. Not expressed in brain, heart, skeletal muscle, kidney, liver and bone marrow. Expressed in epididymis and testis.

The protein localises to the golgi apparatus. It is found in the golgi stack membrane. It carries out the reaction a beta-D-galactosyl-(1-&gt;4)-N-acetyl-beta-D-glucosaminyl derivative + GDP-beta-L-fucose = an alpha-L-Fuc-(1-&gt;2)-beta-D-Gal-(1-&gt;4)-beta-D-GlcNAc derivative + GDP + H(+). The enzyme catalyses a ganglioside GA1 + GDP-beta-L-fucose = a ganglioside Fuc-GA1 + GDP + H(+). The catalysed reaction is a beta-D-Gal-(1-&gt;3)-beta-D-GlcNAc-(1-&gt;3)-beta-D-Gal-(1-&gt;4)-beta-D-Glc-(1&lt;-&gt;1')-Cer(d18:1(4E)) + GDP-beta-L-fucose = alpha-L-fucosyl-(1-&gt;2)- beta-D-galactosyl-(1-&gt;3)-N-acetyl-beta-D-glucosaminyl-(1-&gt;3)-beta-D-galactosyl-(1-&gt;4)-beta-D-glucosyl-(1&lt;-&gt;1')-N-acylsphing-4-enine + GDP + H(+). It catalyses the reaction a neolactoside nLc4Cer(d18:1(4E)) + GDP-beta-L-fucose = a neolactoside IV(2)-alpha-Fuc-nLc4Cer(d18:1(4E)) + GDP + H(+). It carries out the reaction a ganglioside GM1 + GDP-beta-L-fucose = a ganglioside Fuc-GM1 + GDP + H(+). The enzyme catalyses beta-D-galactosyl-(1-&gt;3)-N-acetyl-D-galactosamine + GDP-beta-L-fucose = alpha-L-fucosyl-(1-&gt;2)-beta-D-galactosyl-(1-&gt;3)-N-acetyl-D-galactosamine + GDP + H(+). The protein operates within protein modification; protein glycosylation. Its function is as follows. Catalyzes the transfer of L-fucose, from a guanosine diphosphate-beta-L-fucose, to the terminal galactose residue of glycoconjugates through an alpha(1,2) linkage leading to H antigen synthesis that is an intermediate substrate in the synthesis of ABO blood group antigens. H antigen is essential for maturation of the glomerular layer of the main olfactory bulb, in cell migration and early cell-cell contacts during tumor associated angiogenesis. Preferentially fucosylates soluble lactose and to a lesser extent, fucosylates glycolipids gangliosides GA1 and GM1a. In Mus musculus (Mouse), this protein is Galactoside alpha-(1,2)-fucosyltransferase 1.